A 259-amino-acid chain; its full sequence is Phosphate import ATP-binding protein PstB 1 (259 aa).

One can recognise an ABC transporter domain in the interval 7-254; it reads VKPEDVYQIN…PDDHRTKDYI (248 aa). 45-52 provides a ligand contact to ATP; that stretch reads GPSGCGKS.

Belongs to the ABC transporter superfamily. Phosphate importer (TC 3.A.1.7) family. As to quaternary structure, the complex is composed of two ATP-binding proteins (PstB), two transmembrane proteins (PstC and PstA) and a solute-binding protein (PstS).

It is found in the cell membrane. The enzyme catalyses phosphate(out) + ATP + H2O = ADP + 2 phosphate(in) + H(+). Functionally, part of the ABC transporter complex PstSACB involved in phosphate import. Responsible for energy coupling to the transport system. The polypeptide is Phosphate import ATP-binding protein PstB 1 (Bacillus licheniformis (strain ATCC 14580 / DSM 13 / JCM 2505 / CCUG 7422 / NBRC 12200 / NCIMB 9375 / NCTC 10341 / NRRL NRS-1264 / Gibson 46)).